Here is a 706-residue protein sequence, read N- to C-terminus: Coiled-coil domain-containing protein 177 (706 aa).

The segment covering 1 to 11 (MVDPVPEEEKE) has biased composition (acidic residues). 3 disordered regions span residues 1–63 (MVDP…GGRR), 179–262 (ASAL…LREL), and 268–287 (ASAR…NPLG). Composition is skewed to low complexity over residues 28-49 (PPDA…AAAP) and 179-209 (ASAL…RRTS). A compositionally biased stretch (pro residues) spans 210–221 (PSPPARSRPPPA). Over residues 242-257 (ALSSESGASSSSYSGE) the composition is skewed to low complexity. Ser310 is subject to Phosphoserine. Residues 360–624 (AAHGQWEQQR…QTRLEKERAQ (265 aa)) adopt a coiled-coil conformation. Disordered stretches follow at residues 364–386 (QWEQ…KQRA), 398–425 (VEER…RSEE), 448–580 (DDRL…EREH), and 651–706 (ERSE…LDRK). Residues 368 to 386 (QRVRAEQRREREEREKQRA) are compositionally biased toward basic and acidic residues. Basic and acidic residues-rich tracts occupy residues 448 to 529 (DDRL…REGL), 548 to 580 (QEQR…EREH), and 651 to 663 (ERSE…RRSA). The span at 664 to 674 (LESARSTARAS) shows a compositional bias: low complexity. Residues 676–706 (HVREKVREETNTRSFDRMVREAQLHASLDRK) are compositionally biased toward basic and acidic residues.

The protein is Coiled-coil domain-containing protein 177 (Ccdc177) of Mus musculus (Mouse).